Consider the following 399-residue polypeptide: Acetate kinase (399 aa).

Residue Asn-7 participates in Mg(2+) binding. Lys-14 is an ATP binding site. Residue Arg-91 coordinates substrate. Asp-148 serves as the catalytic Proton donor/acceptor. ATP contacts are provided by residues 208–212, 283–285, and 331–335; these read HLGNG, DFR, and GIGEN. A Mg(2+)-binding site is contributed by Glu-384.

It belongs to the acetokinase family. In terms of assembly, homodimer. Mg(2+) is required as a cofactor. The cofactor is Mn(2+).

The protein resides in the cytoplasm. It carries out the reaction acetate + ATP = acetyl phosphate + ADP. The protein operates within metabolic intermediate biosynthesis; acetyl-CoA biosynthesis; acetyl-CoA from acetate: step 1/2. Its function is as follows. Catalyzes the formation of acetyl phosphate from acetate and ATP. Can also catalyze the reverse reaction. The polypeptide is Acetate kinase (Acetivibrio thermocellus (strain ATCC 27405 / DSM 1237 / JCM 9322 / NBRC 103400 / NCIMB 10682 / NRRL B-4536 / VPI 7372) (Clostridium thermocellum)).